Reading from the N-terminus, the 317-residue chain is Transaldolase (317 aa).

The Schiff-base intermediate with substrate role is filled by Lys-126.

This sequence belongs to the transaldolase family. Type 1 subfamily. As to quaternary structure, homodimer.

It localises to the cytoplasm. The catalysed reaction is D-sedoheptulose 7-phosphate + D-glyceraldehyde 3-phosphate = D-erythrose 4-phosphate + beta-D-fructose 6-phosphate. It functions in the pathway carbohydrate degradation; pentose phosphate pathway; D-glyceraldehyde 3-phosphate and beta-D-fructose 6-phosphate from D-ribose 5-phosphate and D-xylulose 5-phosphate (non-oxidative stage): step 2/3. Transaldolase is important for the balance of metabolites in the pentose-phosphate pathway. This is Transaldolase from Burkholderia thailandensis (strain ATCC 700388 / DSM 13276 / CCUG 48851 / CIP 106301 / E264).